A 140-amino-acid chain; its full sequence is L-fucose mutarotase (140 aa).

H22 serves as the catalytic Proton donor. Substrate-binding positions include D30, R107, and 129–131; that span reads YGN.

The protein belongs to the RbsD / FucU family. FucU mutarotase subfamily. In terms of assembly, homodecamer.

Its subcellular location is the cytoplasm. It carries out the reaction alpha-L-fucose = beta-L-fucose. It participates in carbohydrate metabolism; L-fucose metabolism. Involved in the anomeric conversion of L-fucose. This is L-fucose mutarotase from Shigella boydii serotype 18 (strain CDC 3083-94 / BS512).